A 126-amino-acid chain; its full sequence is UPF0538 protein C2orf76 homolog (126 aa).

This sequence belongs to the UPF0538 family.

In Xenopus tropicalis (Western clawed frog), this protein is UPF0538 protein C2orf76 homolog.